The following is a 549-amino-acid chain: Exodeoxyribonuclease 7 large subunit (549 aa).

Residues 511–549 (LVATDPPVDPKPTRKPVQKSSSPKPSSRKPKKSQQEDLF) form a disordered region.

This sequence belongs to the XseA family. As to quaternary structure, heterooligomer composed of large and small subunits.

Its subcellular location is the cytoplasm. It catalyses the reaction Exonucleolytic cleavage in either 5'- to 3'- or 3'- to 5'-direction to yield nucleoside 5'-phosphates.. Bidirectionally degrades single-stranded DNA into large acid-insoluble oligonucleotides, which are then degraded further into small acid-soluble oligonucleotides. This is Exodeoxyribonuclease 7 large subunit from Beijerinckia indica subsp. indica (strain ATCC 9039 / DSM 1715 / NCIMB 8712).